A 2643-amino-acid chain; its full sequence is BAH and coiled-coil domain-containing protein 1 (2643 aa).

2 disordered regions span residues S23 to P45 and S84 to H106. K220 is modified (N6-acetyllysine). Composition is skewed to basic and acidic residues over residues K224 to K249 and E683 to V702. Disordered stretches follow at residues K224–G273, P674–Q704, G721–E758, R985–A1023, and T1038–P1299. Positions R985–P1003 are enriched in basic and acidic residues. Over residues R1133–S1149 the composition is skewed to pro residues. Over residues A1210 to E1224 the composition is skewed to polar residues. Residues Q1269 to V1284 show a composition bias toward acidic residues. 2 coiled-coil regions span residues A1346–A1373 and L1437–S1486. The span at Q1466–S1484 shows a compositional bias: basic and acidic residues. 8 disordered regions span residues Q1466–K1520, G1537–S1559, K1604–M1641, R1746–T1781, F1875–L1896, S2055–G2124, C2322–P2341, and S2349–E2386. Residues P1487–S1501 show a composition bias toward basic residues. Basic and acidic residues predominate over residues P1631–M1641. The segment covering G1757–T1767 has biased composition (basic residues). Residues F1875–A1892 are compositionally biased toward acidic residues. Residues S2349–S2374 show a composition bias toward low complexity. A compositionally biased stretch (acidic residues) spans D2375–E2386. One can recognise a BAH domain in the interval E2517–D2637.

This chain is BAH and coiled-coil domain-containing protein 1 (Bahcc1), found in Mus musculus (Mouse).